Here is a 481-residue protein sequence, read N- to C-terminus: MSYIKKLRARLDSGEISAVELTKEYLAKIKEQDKRINSIITLCEAEALKEAEDADAIISAGKQGLLTGIPILHKDLFCTKGIRTTAASKMLDNFVAPYDSTVTKNCKDQGMVTLGKLNMDEFAMGSTNEYSYYGAVSNPWDLERVPGGSSGGSAAAVAAGFAPISTGSDTGGSVRQPASFCGLTAMKPSYGSTSRFGMVAFASSFDQAGIFGHYAEDVAIMLDAIAGECEFDSTCVGVKQNHFTQDLEKDISSKVIGVDESLIKDLPAQIQEAVSKTLDNFKKLGAEIKSVKVPDLKEALSTYYIITPAEAAANLARYDGIRYGYRNPEARDLDELYRKSRTDGFGAEVKRRIMIGNYVLASSQYDSYYNKAQQLRKVMTDQINQIFTQVDAIFMPASPSEAFKKGDKLDPVSAYLSDIYTIPANISGLPAIAFPIGFANNLPVGGQLMAKAFNDNILTQMVVQYQKHYGIEEFILQQARI.

Residues lysine 74 and serine 149 each act as charge relay system in the active site. The active-site Acyl-ester intermediate is the serine 173.

It belongs to the amidase family. GatA subfamily. Heterotrimer of A, B and C subunits.

The enzyme catalyses L-glutamyl-tRNA(Gln) + L-glutamine + ATP + H2O = L-glutaminyl-tRNA(Gln) + L-glutamate + ADP + phosphate + H(+). Its function is as follows. Allows the formation of correctly charged Gln-tRNA(Gln) through the transamidation of misacylated Glu-tRNA(Gln) in organisms which lack glutaminyl-tRNA synthetase. The reaction takes place in the presence of glutamine and ATP through an activated gamma-phospho-Glu-tRNA(Gln). This Francisella tularensis subsp. holarctica (strain FTNF002-00 / FTA) protein is Glutamyl-tRNA(Gln) amidotransferase subunit A.